Consider the following 211-residue polypeptide: Testis-expressed protein 35 (211 aa).

Positions 47 to 111 form a coiled coil; the sequence is GGTKELKNEL…MDVLINIQKN (65 aa).

The protein is Testis-expressed protein 35 (Tex35) of Bos taurus (Bovine).